The following is a 382-amino-acid chain: 1-deoxy-D-xylulose 5-phosphate reductoisomerase (382 aa).

NADPH-binding residues include Thr-10, Gly-11, Ser-12, Ile-13, Asn-38, and Asn-120. A 1-deoxy-D-xylulose 5-phosphate-binding site is contributed by Lys-121. Glu-122 contributes to the NADPH binding site. Asp-146 contacts Mn(2+). Residues Ser-147, Glu-148, Ser-172, and His-195 each coordinate 1-deoxy-D-xylulose 5-phosphate. Residue Glu-148 participates in Mn(2+) binding. Gly-201 provides a ligand contact to NADPH. Ser-208, Asn-213, Lys-214, and Glu-217 together coordinate 1-deoxy-D-xylulose 5-phosphate. Residue Glu-217 participates in Mn(2+) binding.

The protein belongs to the DXR family. It depends on Mg(2+) as a cofactor. Mn(2+) serves as cofactor.

The catalysed reaction is 2-C-methyl-D-erythritol 4-phosphate + NADP(+) = 1-deoxy-D-xylulose 5-phosphate + NADPH + H(+). Its pathway is isoprenoid biosynthesis; isopentenyl diphosphate biosynthesis via DXP pathway; isopentenyl diphosphate from 1-deoxy-D-xylulose 5-phosphate: step 1/6. Its function is as follows. Catalyzes the NADPH-dependent rearrangement and reduction of 1-deoxy-D-xylulose-5-phosphate (DXP) to 2-C-methyl-D-erythritol 4-phosphate (MEP). This chain is 1-deoxy-D-xylulose 5-phosphate reductoisomerase, found in Thermoanaerobacter pseudethanolicus (strain ATCC 33223 / 39E) (Clostridium thermohydrosulfuricum).